We begin with the raw amino-acid sequence, 359 residues long: Peptide chain release factor 1 (359 aa).

N5-methylglutamine is present on glutamine 234.

It belongs to the prokaryotic/mitochondrial release factor family. Post-translationally, methylated by PrmC. Methylation increases the termination efficiency of RF1.

It is found in the cytoplasm. Its function is as follows. Peptide chain release factor 1 directs the termination of translation in response to the peptide chain termination codons UAG and UAA. This chain is Peptide chain release factor 1, found in Clavibacter michiganensis subsp. michiganensis (strain NCPPB 382).